Consider the following 122-residue polypeptide: Phosphoribosyl-ATP pyrophosphatase (122 aa).

Belongs to the PRA-PH family.

It is found in the cytoplasm. It catalyses the reaction 1-(5-phospho-beta-D-ribosyl)-ATP + H2O = 1-(5-phospho-beta-D-ribosyl)-5'-AMP + diphosphate + H(+). The protein operates within amino-acid biosynthesis; L-histidine biosynthesis; L-histidine from 5-phospho-alpha-D-ribose 1-diphosphate: step 2/9. The sequence is that of Phosphoribosyl-ATP pyrophosphatase from Cupriavidus metallidurans (strain ATCC 43123 / DSM 2839 / NBRC 102507 / CH34) (Ralstonia metallidurans).